We begin with the raw amino-acid sequence, 662 residues long: uncharacterized protein (662 aa).

This is an uncharacterized protein from Ictalurid herpesvirus 1 (strain Auburn) (IcHV-1).